A 419-amino-acid polypeptide reads, in one-letter code: UDP-N-acetylglucosamine 1-carboxyvinyltransferase (419 aa).

22–23 (KN) is a phosphoenolpyruvate binding site. Residue R92 participates in UDP-N-acetyl-alpha-D-glucosamine binding. The active-site Proton donor is the C116. The residue at position 116 (C116) is a 2-(S-cysteinyl)pyruvic acid O-phosphothioketal. UDP-N-acetyl-alpha-D-glucosamine is bound by residues D306 and I328.

This sequence belongs to the EPSP synthase family. MurA subfamily.

It localises to the cytoplasm. It catalyses the reaction phosphoenolpyruvate + UDP-N-acetyl-alpha-D-glucosamine = UDP-N-acetyl-3-O-(1-carboxyvinyl)-alpha-D-glucosamine + phosphate. It participates in cell wall biogenesis; peptidoglycan biosynthesis. Its function is as follows. Cell wall formation. Adds enolpyruvyl to UDP-N-acetylglucosamine. The protein is UDP-N-acetylglucosamine 1-carboxyvinyltransferase of Psychromonas ingrahamii (strain DSM 17664 / CCUG 51855 / 37).